The sequence spans 376 residues: Protein insensitive (376 aa).

The stretch at 50-79 forms a coiled coil; the sequence is QVEVENRALRDKVRYLEAKLQQHKDLLSQI. A BEN domain is found at 258–356; it reads GPNNTCVPAS…TKCADENKMM (99 aa).

Homodimer. Interacts (via BEN domain) with Su(H). Interacts with Cp190.

The protein localises to the nucleus. Can act as both a transcriptional repressor and corepressor. Represses the expression of genes involved in neural development and preferentially binds palindromic sequence 5'-CCAATTGG-3' to mediate transcriptional repression. Acts as a corepressor for suppressor of hairless (Su(H)) and inhibits Notch signaling during peripheral nervous system development. The sequence is that of Protein insensitive (insv) from Drosophila melanogaster (Fruit fly).